A 454-amino-acid polypeptide reads, in one-letter code: Glutamyl-tRNA(Gln) amidotransferase subunit A (454 aa).

Residues K56 and S131 each act as charge relay system in the active site. S155 functions as the Acyl-ester intermediate in the catalytic mechanism.

It belongs to the amidase family. GatA subfamily. In terms of assembly, heterotrimer of A, B and C subunits.

It catalyses the reaction L-glutamyl-tRNA(Gln) + L-glutamine + ATP + H2O = L-glutaminyl-tRNA(Gln) + L-glutamate + ADP + phosphate + H(+). In terms of biological role, allows the formation of correctly charged Gln-tRNA(Gln) through the transamidation of misacylated Glu-tRNA(Gln) in organisms which lack glutaminyl-tRNA synthetase. The reaction takes place in the presence of glutamine and ATP through an activated gamma-phospho-Glu-tRNA(Gln). The chain is Glutamyl-tRNA(Gln) amidotransferase subunit A from Campylobacter lari (strain RM2100 / D67 / ATCC BAA-1060).